Consider the following 877-residue polypeptide: Phosphoenolpyruvate carboxylase (877 aa).

Active-site residues include His138 and Lys543.

Belongs to the PEPCase type 1 family. Mg(2+) is required as a cofactor.

The enzyme catalyses oxaloacetate + phosphate = phosphoenolpyruvate + hydrogencarbonate. Functionally, forms oxaloacetate, a four-carbon dicarboxylic acid source for the tricarboxylic acid cycle. The sequence is that of Phosphoenolpyruvate carboxylase from Aeromonas salmonicida (strain A449).